We begin with the raw amino-acid sequence, 606 residues long: Mannan endo-1,4-beta-mannosidase A (606 aa).

The N-terminal stretch at 1 to 19 (MKSLNVILTLLSLIISVLS) is a signal peptide. The region spanning 22–140 (VYYEAEDGKL…WMWVDAFVIN (119 aa)) is the CBM6 domain. One can recognise a GH26 domain in the interval 164–458 (PAAKKLYDFL…FNHKTVMNMD (295 aa)). Residue Trp-285 participates in substrate binding. The active-site Proton donor is Glu-318. Trp-323 and Tyr-378 together coordinate substrate. Glu-406 (nucleophile) is an active-site residue. Residues 472 to 489 (SGSSHNGNSESNSNTGNS) form a linker region. 3 CBM10 domains span residues 491-527 (ECWSINLGYPCCIGDYVVTTDENGDWGVENNEWCGIV), 530-566 (SCWSEPLGYPCCVGNTVISADESGDWGVENNEWCGIV), and 569-605 (SCWAEFLGYPCCVGNTVISTDEFGDWGVENDDWCGIL). Residue Trp-493 coordinates substrate.

The protein belongs to the glycosyl hydrolase 26 family.

It catalyses the reaction Random hydrolysis of (1-&gt;4)-beta-D-mannosidic linkages in mannans, galactomannans and glucomannans.. In terms of biological role, hydrolyzes 1,4-beta linked polysaccharide backbones of mannans, one of the major hemicellulose components in hardwoods and softwoods. Shows very high activity against mannohexaose but not against mannopentaose and smaller mannooligosaccharides. The major products released from mannooligosaccharide hydrolysis are mannose and mannobiose. The reiterated 40 AA domain is involved in binding the cellulase-hemicellulase complex. The chain is Mannan endo-1,4-beta-mannosidase A (MANA) from Piromyces sp.